Reading from the N-terminus, the 319-residue chain is Cytochrome c biogenesis protein CcsA (319 aa).

7 helical membrane-spanning segments follow: residues 9 to 29 (ILTH…LITL), 44 to 64 (GVIG…AYSG), 71 to 91 (LYES…FPYF), 143 to 163 (MVLG…LLVI), 225 to 245 (IISL…VWAN), 259 to 273 (TWAF…IYLH), and 286 to 306 (AIVA…VNLL).

It belongs to the CcmF/CycK/Ccl1/NrfE/CcsA family. As to quaternary structure, may interact with Ccs1.

It localises to the plastid. Its subcellular location is the chloroplast thylakoid membrane. Required during biogenesis of c-type cytochromes (cytochrome c6 and cytochrome f) at the step of heme attachment. This Oenothera biennis (German evening primrose) protein is Cytochrome c biogenesis protein CcsA.